The chain runs to 1016 residues: MAETESGTGNSPSHRLSETSNASGNRSHQQSKQIASYKSSKPNVFIRFIRAIFGYRKTSVTLFVFITIIATLILVELSNSLDFSVKLPTNNLERTILDNSWLDLQKIGKEEHPYTSKGNDYVHDYLEAKITELIGKSLFIECDNDVNYTNNIIFKTENDLYNQVTYYESNNLLVRINGSDSSLPALLVSAHFDSVPSSFGVTDDGMGIASLLGILNYYSSDGIDQPMRTIILNFNNNEEFGLMGATSFLHHPWFKQVRYFLNLEGTGAGGKAVLFRGTDYGIVKYFKHVRYPFGTSLFQQGFNNHLIHSETDYKIYKENGGIRGIDLAFYKPRDIYHTASDSIKNIDIKSLWHMLSNSLDFVEIVSSQRIDLDDEDTSPESDEKSREFAIFSSFFNWFFVIPASQLVLINVTCLAVIPLISLPLLVIIFNYKKNWHIGFINAIKFPVSLVLSICILNIITHNVIASINEFLPNSSYDSIVSTLYSLFLLLNYLFLNGINFIFKGYKGLYHDEKLILIIQTSFIYWVLLIVSTNKLSKNKIGNDHTGEFPLIMLFLLQSIGALFGLFSWSFKKTTPDELRNNDDEACQALLSREEHNNYGSNEAELESGEPISSNSSVSLNSSSSQVTNNLVKNLRKSFSYDWSIQYVVIVPLSSLIVYNTGSLLLSGLNKSIQESLNAEKLIFDLIQLVAVTLAIPFLPFIFKINRLLVTALVLVFCSGFISIFLKSPFDQLNPLKLRFVQSINLDESSDISVVNVFGRYGSPMNNVLLDLPSLKETNESLECNNLQDGMQLCSYKTLLSPNLSPDVTDFNDYLDVQVLKNSSSDYPYGLLSGEIKINVPENRVCRLSFNNSNFENSKQSLVRTILVYEDNNYENSSNKLFPFEVSEFQLANLPEGFSRDKKGTYIYKNLNGIDKLELNKLSWDKPYHVGFQWMPKFVDSVSAENENTNVPYTTDFNNLGIQVECFWGNLGYANNENKSEDERIPAYGEVLHYSPNYVSWANKESGLVSVSKYVEI.

Residues 1-36 (MAETESGTGNSPSHRLSETSNASGNRSHQQSKQIAS) form a disordered region. Topologically, residues 1-57 (MAETESGTGNSPSHRLSETSNASGNRSHQQSKQIASYKSSKPNVFIRFIRAIFGYRK) are cytoplasmic. A helical transmembrane segment spans residues 58–78 (TSVTLFVFITIIATLILVELS). Residues 79 to 408 (NSLDFSVKLP…FVIPASQLVL (330 aa)) lie on the Vacuolar side of the membrane. Asn-147 and Asn-177 each carry an N-linked (GlcNAc...) asparagine glycan. Zn(2+)-binding residues include His-191 and Asp-203. Glu-238 acts as the Proton acceptor in catalysis. The Zn(2+) site is built by Glu-239, Glu-264, and His-337. The helical transmembrane segment at 409–429 (INVTCLAVIPLISLPLLVIIF) threads the bilayer. Residues 430 to 438 (NYKKNWHIG) are Cytoplasmic-facing. A helical transmembrane segment spans residues 439 to 459 (FINAIKFPVSLVLSICILNII). Over 460–481 (THNVIASINEFLPNSSYDSIVS) the chain is Vacuolar. Asn-473 is a glycosylation site (N-linked (GlcNAc...) asparagine). A helical membrane pass occupies residues 482 to 502 (TLYSLFLLLNYLFLNGINFIF). Over 503-511 (KGYKGLYHD) the chain is Cytoplasmic. A helical membrane pass occupies residues 512 to 532 (EKLILIIQTSFIYWVLLIVST). Residues 533–547 (NKLSKNKIGNDHTGE) are Vacuolar-facing. The chain crosses the membrane as a helical span at residues 548 to 568 (FPLIMLFLLQSIGALFGLFSW). The Cytoplasmic segment spans residues 569–646 (SFKKTTPDEL…SFSYDWSIQY (78 aa)). Positions 598–622 (YGSNEAELESGEPISSNSSVSLNSS) are disordered. Positions 612 to 622 (SSNSSVSLNSS) are enriched in low complexity. A helical membrane pass occupies residues 647–667 (VVIVPLSSLIVYNTGSLLLSG). The Vacuolar segment spans residues 668–681 (LNKSIQESLNAEKL). Asn-669 carries an N-linked (GlcNAc...) asparagine glycan. The helical transmembrane segment at 682–702 (IFDLIQLVAVTLAIPFLPFIF) threads the bilayer. The Cytoplasmic portion of the chain corresponds to 703–706 (KINR). The helical transmembrane segment at 707 to 727 (LLVTALVLVFCSGFISIFLKS) threads the bilayer. The Vacuolar portion of the chain corresponds to 728–1016 (PFDQLNPLKL…LVSVSKYVEI (289 aa)). N-linked (GlcNAc...) asparagine glycosylation is found at Asn-778, Asn-821, Asn-850, Asn-875, and Asn-977.

It belongs to the peptidase M28 family. The cofactor is Zn(2+).

The protein resides in the vacuole membrane. May be involved in vacuolar sorting and osmoregulation. This is Vacuolar membrane protease from Debaryomyces hansenii (strain ATCC 36239 / CBS 767 / BCRC 21394 / JCM 1990 / NBRC 0083 / IGC 2968) (Yeast).